Reading from the N-terminus, the 566-residue chain is Protein OBERON 1 (566 aa).

Residues 1–10 are compositionally biased toward polar residues; it reads MGTSSGSNLP. A disordered region spans residues 1-79; it reads MGTSSGSNLP…KTGPDSHDQH (79 aa). Residues 18 to 29 are compositionally biased toward low complexity; the sequence is QQLQTSLSLVSS. Polar residues predominate over residues 47–60; it reads ESASSQETWPTSKS. Positions 64–79 are enriched in basic and acidic residues; the sequence is RKTDSGKTGPDSHDQH. Residues 225-289 form a PHD-type zinc finger; that stretch reads LCMCVICNKF…LFKCRACNHT (65 aa). Residues 407-522 adopt a coiled-coil conformation; the sequence is EEKTRMYKKA…LFEKIKEQES (116 aa). Residues 545-566 form a disordered region; that stretch reads YNASSPRVDPRSNQRNPFRSNP. The segment covering 555–566 has biased composition (polar residues); it reads RSNQRNPFRSNP.

In terms of assembly, self-interacts. Interacts with OBE2, OBE3 and OBE4. Binds to VPg of pea seed borne mosaic virus (PSbMV), turnip mosaic virus (TuMV) and lettuce mosaic virus (LMV), but not with VPg of tobacco etch virus (TEV), cowpea mosaic virus (CPMV), tomato black ring virus (TBRV) and grapevine fan leaf virus (GFLV). Interacts with RBL. In terms of tissue distribution, expressed in roots, seedlings, stems, leaves, flowers and siliques, especially in the vasculature.

The protein resides in the nucleus. The protein localises to the nucleoplasm. Functionally, probable transcription factor that acts together with OBE2 for the maintenance and/or establishment of both the shoot and root meristems, probably by controlling the expression of the meristem genes such as WUS, PLT1 and PLT2 and of genes required for auxin responses. Promotes cell meristematic activity via the WUSCHEL-CLAVATA pathway. Involved in the development of the basal pole and in auxin-mediated root and vascular development in the embryo. Confers sensitivity to turnip mosaic virus (TuMV) probably by promoting viral movement and multiplication via interaction with TuMV VPg. The protein is Protein OBERON 1 of Arabidopsis thaliana (Mouse-ear cress).